Consider the following 144-residue polypeptide: Maximins 10/H15 (144 aa).

Residues 1 to 18 form the signal peptide; it reads MNFKYIVAVSFLIASAYA. The propeptide occupies 19 to 43; that stretch reads RSVQNDEQSLSQRDVLEEESLREIR. Residue Ser70 is modified to Serine amide. Residues 74–123 constitute a propeptide that is removed on maturation; sequence TAEDHEVMKRLEAVMRDLDSLDYPEEATERETRGFNQEEIANLFTKKEKR. Residue Leu143 is modified to Leucine amide.

Belongs to the bombinin family. Expressed by the skin glands.

The protein localises to the secreted. Maximin-10 shows antimicrobial activity against bacteria and against the fungus C.albicans. It has little hemolytic activity. Its function is as follows. Maximin-H15 shows antimicrobial activity against bacteria and against the fungus C.albicans. Shows strong hemolytic activity. This chain is Maximins 10/H15, found in Bombina maxima (Giant fire-bellied toad).